Consider the following 202-residue polypeptide: Phosphatidyl-N-methylethanolamine N-methyltransferase (202 aa).

Residues 1 to 12 are Lumenal-facing; sequence MTTLSDYVDFSQ. An intramembrane region (helical) is located at residues 13-33; that stretch reads DSFKYAALSIAFNPIFWNVVA. The Lumenal portion of the chain corresponds to 34-45; it reads RAEYRSHFLTRI. A helical transmembrane segment spans residues 46 to 66; that stretch reads FGSPYRGCYFLAITIFSLGIL. Residues 67–90 lie on the Cytoplasmic side of the membrane; sequence RDHIYQQALEDQPYYAPVHQPVLG. The chain crosses the membrane as a helical span at residues 91-111; it reads GALFAVGSVLVLSSMYALGVT. 95 to 97 serves as a coordination point for S-adenosyl-L-methionine; the sequence is AVG. Over 112–154 the chain is Lumenal; the sequence is GTYLGDYFGILMDAPVTGFPFNVTGSPMYWGSTLNFLGVALYK. The chain crosses the membrane as a helical span at residues 155 to 175; it reads GKVAGILLTALVFVLYWFALK. The Cytoplasmic segment spans residues 176 to 202; sequence WEDPFTAEIYAKRERERAKSKRGGKNQ. Position 177 to 178 (177 to 178) interacts with S-adenosyl-L-methionine; it reads ED.

The protein belongs to the class VI-like SAM-binding methyltransferase superfamily. PEMT/PEM2 methyltransferase family.

It is found in the endoplasmic reticulum membrane. Its subcellular location is the mitochondrion membrane. It catalyses the reaction a 1,2-diacyl-sn-glycero-3-phospho-N-methylethanolamine + S-adenosyl-L-methionine = a 1,2-diacyl-sn-glycero-3-phospho-N,N-dimethylethanolamine + S-adenosyl-L-homocysteine + H(+). It carries out the reaction a 1,2-diacyl-sn-glycero-3-phospho-N,N-dimethylethanolamine + S-adenosyl-L-methionine = a 1,2-diacyl-sn-glycero-3-phosphocholine + S-adenosyl-L-homocysteine + H(+). It functions in the pathway phospholipid metabolism; phosphatidylcholine biosynthesis. Functionally, catalyzes the second two steps of the methylation pathway of phosphatidylcholine biosynthesis, the SAM-dependent methylation of phosphatidylmonomethylethanolamine (PMME) to phosphatidyldimethylethanolamine (PDME) and of PDME to phosphatidylcholine (PC). In Emericella nidulans (strain FGSC A4 / ATCC 38163 / CBS 112.46 / NRRL 194 / M139) (Aspergillus nidulans), this protein is Phosphatidyl-N-methylethanolamine N-methyltransferase.